The following is a 127-amino-acid chain: Ribosome-binding factor A (127 aa).

This sequence belongs to the RbfA family. As to quaternary structure, monomer. Binds 30S ribosomal subunits, but not 50S ribosomal subunits or 70S ribosomes.

It localises to the cytoplasm. In terms of biological role, one of several proteins that assist in the late maturation steps of the functional core of the 30S ribosomal subunit. Associates with free 30S ribosomal subunits (but not with 30S subunits that are part of 70S ribosomes or polysomes). Required for efficient processing of 16S rRNA. May interact with the 5'-terminal helix region of 16S rRNA. This is Ribosome-binding factor A from Chloroflexus aurantiacus (strain ATCC 29366 / DSM 635 / J-10-fl).